The sequence spans 142 residues: Large ribosomal subunit protein uL13 (142 aa).

Belongs to the universal ribosomal protein uL13 family. As to quaternary structure, part of the 50S ribosomal subunit.

In terms of biological role, this protein is one of the early assembly proteins of the 50S ribosomal subunit, although it is not seen to bind rRNA by itself. It is important during the early stages of 50S assembly. The protein is Large ribosomal subunit protein uL13 of Methylococcus capsulatus (strain ATCC 33009 / NCIMB 11132 / Bath).